The sequence spans 435 residues: Xylose isomerase (435 aa).

Catalysis depends on residues H100 and D103. Mg(2+) contacts are provided by E231, E267, H270, D295, D306, D308, and D338.

This sequence belongs to the xylose isomerase family. As to quaternary structure, homotetramer. Mg(2+) is required as a cofactor.

The protein localises to the cytoplasm. The catalysed reaction is alpha-D-xylose = alpha-D-xylulofuranose. This Brucella anthropi (strain ATCC 49188 / DSM 6882 / CCUG 24695 / JCM 21032 / LMG 3331 / NBRC 15819 / NCTC 12168 / Alc 37) (Ochrobactrum anthropi) protein is Xylose isomerase.